We begin with the raw amino-acid sequence, 313 residues long: Hydroxyacylglutathione hydrolase, mitochondrial (313 aa).

Residues His-107, His-109, Asp-111, His-112, His-163, and Asp-187 each coordinate Zn(2+). Substrate is bound by residues 196-198 and 226-228; these read KFF and HEY. Residue His-226 participates in Zn(2+) binding. 2 stretches are compositionally biased toward basic and acidic residues: residues 285–294 and 301–313; these read VQEHAGERDP and IRKEKDHFKVPKD. A disordered region spans residues 285 to 313; it reads VQEHAGERDPISTMGAIRKEKDHFKVPKD. Residue 302–305 coordinates substrate; that stretch reads RKEK.

Belongs to the metallo-beta-lactamase superfamily. Glyoxalase II family. As to quaternary structure, monomer. The cofactor is Zn(2+).

Its subcellular location is the mitochondrion matrix. The protein localises to the cytoplasm. The enzyme catalyses an S-(2-hydroxyacyl)glutathione + H2O = a 2-hydroxy carboxylate + glutathione + H(+). It carries out the reaction (R)-S-lactoylglutathione + H2O = (R)-lactate + glutathione + H(+). Its function is as follows. Thiolesterase that catalyzes the hydrolysis of S-D-lactoyl-glutathione to form glutathione and D-lactic acid. The sequence is that of Hydroxyacylglutathione hydrolase, mitochondrial (hagh) from Xenopus tropicalis (Western clawed frog).